Reading from the N-terminus, the 281-residue chain is 4-diphosphocytidyl-2-C-methyl-D-erythritol kinase (281 aa).

Lys-15 is a catalytic residue. ATP is bound at residue 98–108; the sequence is PTGAGLGGGSS. Asp-140 is an active-site residue.

This sequence belongs to the GHMP kinase family. IspE subfamily.

It catalyses the reaction 4-CDP-2-C-methyl-D-erythritol + ATP = 4-CDP-2-C-methyl-D-erythritol 2-phosphate + ADP + H(+). It functions in the pathway isoprenoid biosynthesis; isopentenyl diphosphate biosynthesis via DXP pathway; isopentenyl diphosphate from 1-deoxy-D-xylulose 5-phosphate: step 3/6. Functionally, catalyzes the phosphorylation of the position 2 hydroxy group of 4-diphosphocytidyl-2C-methyl-D-erythritol. This Neisseria gonorrhoeae (strain ATCC 700825 / FA 1090) protein is 4-diphosphocytidyl-2-C-methyl-D-erythritol kinase.